We begin with the raw amino-acid sequence, 532 residues long: Probable bifunctional tRNA threonylcarbamoyladenosine biosynthesis protein (532 aa).

The interval 1–323 is kae1; it reads MRVLGVEGTA…FRPDEVSVTW (323 aa). Fe cation contacts are provided by His-107 and His-111. L-threonylcarbamoyladenylate contacts are provided by residues 128 to 132, Asp-160, Gly-173, Glu-177, and Asn-256; that span reads NASGA. A Fe cation-binding site is contributed by Asp-284. Positions 329-532 constitute a Protein kinase domain; sequence PARDPGADAV…GRYQDDPETA (204 aa). Residues 338-346 and Lys-355 contribute to the ATP site; that span reads VRQGAEATV. Asp-444 acts as the Proton acceptor; for kinase activity in catalysis.

In the N-terminal section; belongs to the KAE1 / TsaD family. It in the C-terminal section; belongs to the protein kinase superfamily. Tyr protein kinase family. BUD32 subfamily. Component of the KEOPS complex that consists of Kae1, Bud32, Cgi121 and Pcc1; the whole complex dimerizes. Requires Fe(2+) as cofactor.

The protein localises to the cytoplasm. It carries out the reaction L-seryl-[protein] + ATP = O-phospho-L-seryl-[protein] + ADP + H(+). It catalyses the reaction L-threonyl-[protein] + ATP = O-phospho-L-threonyl-[protein] + ADP + H(+). The catalysed reaction is L-threonylcarbamoyladenylate + adenosine(37) in tRNA = N(6)-L-threonylcarbamoyladenosine(37) in tRNA + AMP + H(+). Required for the formation of a threonylcarbamoyl group on adenosine at position 37 (t(6)A37) in tRNAs that read codons beginning with adenine. Is a component of the KEOPS complex that is probably involved in the transfer of the threonylcarbamoyl moiety of threonylcarbamoyl-AMP (TC-AMP) to the N6 group of A37. The Kae1 domain likely plays a direct catalytic role in this reaction. The Bud32 domain probably displays kinase activity that regulates Kae1 function. This is Probable bifunctional tRNA threonylcarbamoyladenosine biosynthesis protein from Halobacterium salinarum (strain ATCC 700922 / JCM 11081 / NRC-1) (Halobacterium halobium).